Here is a 623-residue protein sequence, read N- to C-terminus: Bifunctional dihydrofolate reductase-thymidylate synthase (623 aa).

A DHFR domain is found at 9-237 (DIYAICACCK…TTLDFLVYSK (229 aa)). 13–14 (IC) provides a ligand contact to substrate. NADP(+)-binding positions include alanine 15 and 38–44 (GLGNKGT). Residue aspartate 53 participates in substrate binding. Repeat copies occupy residues 88 to 91 (GGDN), 94 to 97 (GGDN), and 100 to 103 (GGDN). A 3 X 4 AA repeats of G-G-D-N region spans residues 88 to 103 (GGDNTSGGDNTHGGDN). NADP(+) is bound by residues 115–117 (RSS), 137–139 (SKT), and aspartate 153. Residues isoleucine 173, tyrosine 179, and threonine 194 each contribute to the substrate site. Residue 174 to 181 (GGAQVYRE) coordinates NADP(+). The segment at 263-309 (TAMRRNVAPRTAAPPMGPHSRANGERAPPRARARRTTPRQRKTTSCT) is disordered. Over residues 291 to 304 (PRARARRTTPRQRK) the composition is skewed to basic residues. Residues 337-623 (QHPEYQYLGI…HDKITMEMAA (287 aa)) form a thymidylate synthase region. Residue arginine 360 participates in dUMP binding. The active site involves cysteine 505. DUMP is bound by residues histidine 506, 524-528 (QRSCD), asparagine 536, and 566-568 (HVY).

This sequence in the N-terminal section; belongs to the dihydrofolate reductase family. In the C-terminal section; belongs to the thymidylate synthase family. Homodimer.

The enzyme catalyses (6S)-5,6,7,8-tetrahydrofolate + NADP(+) = 7,8-dihydrofolate + NADPH + H(+). The catalysed reaction is dUMP + (6R)-5,10-methylene-5,6,7,8-tetrahydrofolate = 7,8-dihydrofolate + dTMP. It functions in the pathway cofactor biosynthesis; tetrahydrofolate biosynthesis; 5,6,7,8-tetrahydrofolate from 7,8-dihydrofolate: step 1/1. Functionally, bifunctional enzyme. Involved in de novo dTMP biosynthesis. Key enzyme in folate metabolism. Catalyzes an essential reaction for de novo glycine and purine synthesis, DNA precursor synthesis, and for the conversion of dUMP to dTMP. This Plasmodium vivax protein is Bifunctional dihydrofolate reductase-thymidylate synthase.